The chain runs to 713 residues: Cyclomaltodextrin glucanotransferase (713 aa).

The first 27 residues, 1–27, serve as a signal peptide directing secretion; it reads MKKFLKSTAALALGLSLTFGLFSPAQA. The A1 stretch occupies residues 28–165; that stretch reads APDTSVSNKQ…NIKVIIDFAP (138 aa). Ca(2+) contacts are provided by aspartate 54, asparagine 56, asparagine 59, and asparagine 60. Cysteines 70 and 77 form a disulfide. Glycine 78 and aspartate 80 together coordinate Ca(2+). 127-128 contributes to the substrate binding site; the sequence is YW. Asparagine 166 contributes to the Ca(2+) binding site. The tract at residues 166–229 is b; it reads NHTSPASSDQ…NLYDLADLNH (64 aa). Residues histidine 167 and 172-174 contribute to the substrate site; that span reads SSD. Residue isoleucine 217 coordinates Ca(2+). 220 to 223 contributes to the substrate binding site; it reads NLYD. Aspartate 226 lines the Ca(2+) pocket. The tract at residues 230 to 433 is A2; that stretch reads NNSTVDVYLK…LRKCNPAIAY (204 aa). Arginine 254 contacts substrate. Aspartate 256 functions as the Nucleophile in the catalytic mechanism. 259–260 is a substrate binding site; that stretch reads KH. Histidine 260 serves as a coordination point for Ca(2+). The active-site Proton donor is the glutamate 284. Alanine 342 contributes to the Ca(2+) binding site. The substrate site is built by histidine 354, aspartate 398, and arginine 402. The interval 434-522 is c; sequence GSTQERWINN…GTAVWQYTAA (89 aa). The interval 523–609 is d; it reads TATPTIGHVG…SNVYDNFEVL (87 aa). The IPT/TIG domain occupies 526–607; the sequence is PTIGHVGPMM…TASNVYDNFE (82 aa). Ca(2+) is bound at residue aspartate 604. Residues 608–713 enclose the CBM20 domain; sequence VLSGDQVSVR…TATINVNWQP (106 aa). An e region spans residues 610-713; it reads SGDQVSVRFV…TATINVNWQP (104 aa).

Belongs to the glycosyl hydrolase 13 family. As to quaternary structure, monomer. The cofactor is Ca(2+).

The protein resides in the secreted. The catalysed reaction is Cyclizes part of a (1-&gt;4)-alpha-D-glucan chain by formation of a (1-&gt;4)-alpha-D-glucosidic bond.. This Niallia circulans (Bacillus circulans) protein is Cyclomaltodextrin glucanotransferase (cgt).